Here is a 350-residue protein sequence, read N- to C-terminus: Phenylalanine--tRNA ligase alpha subunit (350 aa).

E259 is a Mg(2+) binding site.

It belongs to the class-II aminoacyl-tRNA synthetase family. Phe-tRNA synthetase alpha subunit type 1 subfamily. In terms of assembly, tetramer of two alpha and two beta subunits. Mg(2+) serves as cofactor.

It is found in the cytoplasm. It carries out the reaction tRNA(Phe) + L-phenylalanine + ATP = L-phenylalanyl-tRNA(Phe) + AMP + diphosphate + H(+). The chain is Phenylalanine--tRNA ligase alpha subunit from Rickettsia typhi (strain ATCC VR-144 / Wilmington).